The sequence spans 345 residues: N-acetyl-gamma-glutamyl-phosphate reductase (345 aa).

The active site involves Cys-149.

It belongs to the NAGSA dehydrogenase family. Type 1 subfamily.

The protein resides in the cytoplasm. It carries out the reaction N-acetyl-L-glutamate 5-semialdehyde + phosphate + NADP(+) = N-acetyl-L-glutamyl 5-phosphate + NADPH + H(+). The protein operates within amino-acid biosynthesis; L-arginine biosynthesis; N(2)-acetyl-L-ornithine from L-glutamate: step 3/4. Functionally, catalyzes the NADPH-dependent reduction of N-acetyl-5-glutamyl phosphate to yield N-acetyl-L-glutamate 5-semialdehyde. The protein is N-acetyl-gamma-glutamyl-phosphate reductase of Bacillus mycoides (strain KBAB4) (Bacillus weihenstephanensis).